A 330-amino-acid polypeptide reads, in one-letter code: Succinoglycan biosynthesis protein ExoA (330 aa).

Helical transmembrane passes span 116–136, 260–280, and 299–319; these read ALAT…FSTF, IAFG…VGVW, and YGPL…AGFW.

It belongs to the glycosyltransferase 2 family.

The protein resides in the cell membrane. It functions in the pathway glycan metabolism; exopolysaccharide biosynthesis. In terms of biological role, glycosyltransferase required for the synthesis of succinoglycan (EPS I). Needed for the addition of the second sugar (glucose). Catalyzes the formation of a beta-1,3 linkage with the galactose lipid carrier. This Rhizobium meliloti (strain 1021) (Ensifer meliloti) protein is Succinoglycan biosynthesis protein ExoA (exoA).